Consider the following 79-residue polypeptide: Putative Fis-like DNA-binding protein (79 aa).

The segment at residues 55–74 is a DNA-binding region (H-T-H motif); it reads QSKASVMLGLNRNTLRKKLI.

Belongs to the transcriptional regulatory Fis family.

This Neisseria meningitidis serogroup A / serotype 4A (strain DSM 15465 / Z2491) protein is Putative Fis-like DNA-binding protein.